We begin with the raw amino-acid sequence, 176 residues long: Xanthine-guanine phosphoribosyltransferase (176 aa).

5-phospho-alpha-D-ribose 1-diphosphate contacts are provided by residues 51-52, R88, and 111-119; these read RG and DDLVDSGKT. R88 is a binding site for GMP. Residue D112 coordinates Mg(2+). Residues D115 and I158 each coordinate guanine. Xanthine is bound by residues D115 and I158. GMP is bound by residues 115–119 and 157–158; these read DSGKT and WI.

The protein belongs to the purine/pyrimidine phosphoribosyltransferase family. XGPT subfamily. As to quaternary structure, homotetramer. Requires Mg(2+) as cofactor.

Its subcellular location is the cell inner membrane. The catalysed reaction is GMP + diphosphate = guanine + 5-phospho-alpha-D-ribose 1-diphosphate. The enzyme catalyses XMP + diphosphate = xanthine + 5-phospho-alpha-D-ribose 1-diphosphate. It catalyses the reaction IMP + diphosphate = hypoxanthine + 5-phospho-alpha-D-ribose 1-diphosphate. Its pathway is purine metabolism; GMP biosynthesis via salvage pathway; GMP from guanine: step 1/1. It functions in the pathway purine metabolism; XMP biosynthesis via salvage pathway; XMP from xanthine: step 1/1. In terms of biological role, purine salvage pathway enzyme that catalyzes the transfer of the ribosyl-5-phosphate group from 5-phospho-alpha-D-ribose 1-diphosphate (PRPP) to the N9 position of the 6-oxopurines guanine and xanthine to form the corresponding ribonucleotides GMP (guanosine 5'-monophosphate) and XMP (xanthosine 5'-monophosphate), with the release of PPi. To a lesser extent, also acts on hypoxanthine. The sequence is that of Xanthine-guanine phosphoribosyltransferase from Roseobacter denitrificans (strain ATCC 33942 / OCh 114) (Erythrobacter sp. (strain OCh 114)).